We begin with the raw amino-acid sequence, 2521 residues long: Partially reducing polyketide synthase tpeA (2521 aa).

In terms of domain architecture, Ketosynthase family 3 (KS3) spans 7–434 (DQSIAVIGLS…GSNAHAIIDN (428 aa)). The segment at 47 to 66 (RWNSRRFQDDKNHSQNTSRT) is disordered. Catalysis depends on for beta-ketoacyl synthase activity residues cysteine 180, histidine 315, and histidine 357. The 302-residue stretch at 554–855 (YVFTGQGAQW…LRGPVTQILQ (302 aa)) folds into the Malonyl-CoA:ACP transacylase (MAT) domain. Positions 948 to 1088 (SSFIGLPMPS…GLVTVEFEQL (141 aa)) are N-terminal hotdog fold. The region spanning 948-1258 (SSFIGLPMPS…CVEMPSTAGV (311 aa)) is the PKS/mFAS DH domain. Positions 949–1256 (SFIGLPMPSF…LTCVEMPSTA (308 aa)) are dehydratase (DH) domain. The C-terminal hotdog fold stretch occupies residues 1100 to 1258 (TTVQQAEAFY…CVEMPSTAGV (159 aa)). The Enoyl reductase (ER) domain maps to 1809–2121 (GMLNTLCFQA…DNRHHGKITL (313 aa)). Residues 2146-2323 (TYLIAGGLGG…AVTIDLGIVK (178 aa)) form the Ketoreductase (KR) domain. The 78-residue stretch at 2433–2510 (DAVLFVTGAV…SFARDLVGKG (78 aa)) folds into the Carrier domain. The residue at position 2470 (serine 2470) is an O-(pantetheine 4'-phosphoryl)serine.

Pantetheine 4'-phosphate serves as cofactor.

It participates in secondary metabolite biosynthesis. In terms of biological role, partially reducing polyketide synthase; part of the gene cluster that mediates the biosynthesis of polyesters containing 2,4-dihydroxy-6-(2-hydroxypropyl)benzoate and 3-hydroxybutyrate moieties, such as talapolyester G, 15G256beta and 15G256beta-2; as well as to oxidized derivatives such as 15G256alpha. The biosynthesis of the polyesters probably starts with the formation of the diketide 3-hydroxybutyryl-S-ACP catalyzed by the partially reducing polyketide synthase tpeA. The acceptance of 3-hydroxybutyryl by the non-reducing polyketide synthase tpeB would initiate further elongation and cyclization, catalyzed by KS and PT, respectively, to form 2,4-dihydroxy-6-(2-hydroxyn-propyl)benzoyl-S-ACP intermediate. The TE domain could catalyze lactonization at this step to yield 6-hydroxymellein as a derailment product. The polyesterification process maybe occurs when additional molecules of 3-hydroxybutyryl are transferred to tpeB. Following the first esterification step, an intramolecular cyclization catalyzed by the TE domain of tpeB would give talarodioxadione 1, whereas the ethyl esterification of talapolyester G perhaps happens spontaneously. Further oxidation by the cytochrome P450 monooxygenase tpeC then leads to the formation of oxidized derivatives. This is Partially reducing polyketide synthase tpeA from Talaromyces stipitatus (strain ATCC 10500 / CBS 375.48 / QM 6759 / NRRL 1006) (Penicillium stipitatum).